The sequence spans 1373 residues: Insulin-like growth factor 1 receptor (1373 aa).

Residues 1 to 30 (MKSGSGGGSPTSLWGLVFLSAALSLWPTSG) form the signal peptide. The cysteines at positions 33 and 52 are disulfide-linked. N-linked (GlcNAc...) asparagine glycans are attached at residues Asn-51, Asn-102, and Asn-135. Disulfide bonds link Cys-150-Cys-178, Cys-182-Cys-205, Cys-192-Cys-211, Cys-215-Cys-224, Cys-219-Cys-230, Cys-231-Cys-239, Cys-235-Cys-248, Cys-251-Cys-260, Cys-264-Cys-276, Cys-282-Cys-303, Cys-307-Cys-321, Cys-324-Cys-328, and Cys-332-Cys-354. Residue Asn-245 is glycosylated (N-linked (GlcNAc...) asparagine). Residue Asn-314 is glycosylated (N-linked (GlcNAc...) asparagine). N-linked (GlcNAc...) asparagine glycosylation is found at Asn-418 and Asn-439. An intrachain disulfide couples Cys-456 to Cys-489. 4 Fibronectin type-III domains span residues 490–610 (ESDV…TNAS), 611–709 (VPSI…TEAE), 735–829 (RPER…TMPA), and 835–928 (IPGP…VPAK). Residues Asn-535, Asn-608, Asn-623, Asn-641, Asn-748, Asn-757, Asn-765, Asn-901, and Asn-914 are each glycosylated (N-linked (GlcNAc...) asparagine). Residues 742–936 (DVMQVANTTM…AKTTYENFMH (195 aa)) lie on the Extracellular side of the membrane. A helical transmembrane segment spans residues 937–960 (LIIALPVAILLIVGGLVIMLYVFH). The Cytoplasmic segment spans residues 961–1373 (RKRNNSRLGN…ALPLPQSSTC (413 aa)). The short motif at 978 to 981 (NPEY) is the IRS1- and SHC1-binding element. At Tyr-981 the chain carries Phosphotyrosine. In terms of domain architecture, Protein kinase spans 1000 to 1276 (ITMNRELGQG…SIKDEMEPSF (277 aa)). ATP contacts are provided by residues 1006–1014 (LGQGSFGMV) and Lys-1034. Asp-1137 acts as the Proton acceptor in catalysis. Phosphotyrosine; by autocatalysis is present on residues Tyr-1163, Tyr-1167, and Tyr-1168. Residues Lys-1170 and Lys-1173 each participate in a glycyl lysine isopeptide (Lys-Gly) (interchain with G-Cter in ubiquitin) cross-link. Ser-1280 is subject to Phosphoserine; by GSK3-beta. Residues 1283-1373 (YSEENKPPEP…ALPLPQSSTC (91 aa)) form a disordered region. Ser-1284 is modified (phosphoserine). Acidic residues predominate over residues 1292 to 1305 (PEELEMELEMEPEN). Residues 1306-1322 (MESVPLDPSASSASLPL) are compositionally biased toward low complexity. A compositionally biased stretch (basic and acidic residues) spans 1323 to 1332 (PERHSGHKAE).

The protein belongs to the protein kinase superfamily. Tyr protein kinase family. Insulin receptor subfamily. As to quaternary structure, tetramer of 2 alpha and 2 beta chains linked by disulfide bonds. The alpha chains contribute to the formation of the ligand-binding domain, while the beta chain carries the kinase domain. Interacts with PIK3R1 and with the PTB/PID domains of IRS1 and SHC1 in vitro when autophosphorylated on tyrosine residues. Forms a hybrid receptor with INSR, the hybrid is a tetramer consisting of 1 alpha chain and 1 beta chain of INSR and 1 alpha chain and 1 beta chain of IGF1R. Interacts with ARRB1 and ARRB2. Interacts with GRB10. Interacts with RACK1. Interacts with SOCS1, SOCS2 and SOCS3. Interacts with 14-3-3 proteins. Interacts with NMD2. Interacts with MAP3K5. Interacts with STAT3. Found in a ternary complex with IGF1 and ITGAV:ITGB3 or ITGA6:ITGB4. Interacts (nascent precursor form) with ZFAND2B. Autophosphorylated on tyrosine residues in response to ligand binding. Autophosphorylation occurs in trans, i.e. one subunit of the dimeric receptor phosphorylates tyrosine residues on the other subunit. Autophosphorylation occurs in a sequential manner; Tyr-1167 is predominantly phosphorylated first, followed by phosphorylation of Tyr-1163 and Tyr-1168. While every single phosphorylation increases kinase activity, all three tyrosine residues in the kinase activation loop (Tyr-1163, Tyr-1167 and Tyr-1168) have to be phosphorylated for optimal activity. Can be autophosphorylated at additional tyrosine residues (in vitro). Autophosphorylated is followed by phosphorylation of juxtamembrane tyrosines and C-terminal serines. May also be phosphorylated at Tyr-1163 and Tyr-1168 by mTORC2. Phosphorylation of Tyr-981 is required for IRS1- and SHC1-binding. Phosphorylation of Ser-1280 by GSK-3beta restrains kinase activity and promotes cell surface expression, it requires a priming phosphorylation at Ser-1284. Dephosphorylated by PTPN1. Post-translationally, polyubiquitinated at Lys-1170 and Lys-1173 through both 'Lys-48' and 'Lys-29' linkages, promoting receptor endocytosis and subsequent degradation by the proteasome. Ubiquitination is facilitated by pre-existing phosphorylation. In terms of processing, sumoylated with SUMO1. Controlled by regulated intramembrane proteolysis (RIP). Undergoes metalloprotease-dependent constitutive ectodomain shedding to produce a membrane-anchored 52 kDa C-Terminal fragment which is further processed by presenilin gamma-secretase to yield an intracellular 50 kDa fragment.

The protein localises to the cell membrane. It carries out the reaction L-tyrosyl-[protein] + ATP = O-phospho-L-tyrosyl-[protein] + ADP + H(+). Its activity is regulated as follows. Activated by autophosphorylation at Tyr-1163, Tyr-1167 and Tyr-1168 on the kinase activation loop; phosphorylation at all three tyrosine residues is required for optimal kinase activity. Inhibited by MSC1609119A-1, BMS-754807, PQIP, benzimidazole pyridinone, isoquinolinedione, bis-azaindole, 3-cyanoquinoline, 2,4-bis-arylamino-1,3-pyrimidine, pyrrolopyrimidine, pyrrole-5-carboxaldehyde, picropodophyllin (PPP), tyrphostin derivatives. While most inhibitors bind to the ATP binding pocket, MSC1609119A-1 functions as allosteric inhibitor and binds close to the DFG motif and the activation loop. Its function is as follows. Receptor tyrosine kinase which mediates actions of insulin-like growth factor 1 (IGF1). Binds IGF1 with high affinity and IGF2 and insulin (INS) with a lower affinity. The activated IGF1R is involved in cell growth and survival control. IGF1R is crucial for tumor transformation and survival of malignant cell. Ligand binding activates the receptor kinase, leading to receptor autophosphorylation, and tyrosines phosphorylation of multiple substrates, that function as signaling adapter proteins including, the insulin-receptor substrates (IRS1/2), Shc and 14-3-3 proteins. Phosphorylation of IRSs proteins lead to the activation of two main signaling pathways: the PI3K-AKT/PKB pathway and the Ras-MAPK pathway. The result of activating the MAPK pathway is increased cellular proliferation, whereas activating the PI3K pathway inhibits apoptosis and stimulates protein synthesis. Phosphorylated IRS1 can activate the 85 kDa regulatory subunit of PI3K (PIK3R1), leading to activation of several downstream substrates, including protein AKT/PKB. AKT phosphorylation, in turn, enhances protein synthesis through mTOR activation and triggers the antiapoptotic effects of IGFIR through phosphorylation and inactivation of BAD. In parallel to PI3K-driven signaling, recruitment of Grb2/SOS by phosphorylated IRS1 or Shc leads to recruitment of Ras and activation of the ras-MAPK pathway. In addition to these two main signaling pathways IGF1R signals also through the Janus kinase/signal transducer and activator of transcription pathway (JAK/STAT). Phosphorylation of JAK proteins can lead to phosphorylation/activation of signal transducers and activators of transcription (STAT) proteins. In particular activation of STAT3, may be essential for the transforming activity of IGF1R. The JAK/STAT pathway activates gene transcription and may be responsible for the transforming activity. JNK kinases can also be activated by the IGF1R. IGF1 exerts inhibiting activities on JNK activation via phosphorylation and inhibition of MAP3K5/ASK1, which is able to directly associate with the IGF1R. When present in a hybrid receptor with INSR, binds IGF1. This chain is Insulin-like growth factor 1 receptor (Igf1r), found in Mus musculus (Mouse).